Consider the following 416-residue polypeptide: MSISLSSLILLPIWINMAQIQQGGPDEKEKTTALKDLLSRIDLDELMKKDEPPLDFPDTLEGFEYAFNEKGQLRHIKTGEPFVFNYREDLHRWNQKRYEALGEIITKYVYELLEKDCNLKKVSIPVDATESEPKSFIFMSEDALTNPQKLMVLIHGSGVVRAGQWARRLIINEDLDSGTQIPFIKRAVAEGYGVIVLNPNENYIEVEKPKIHVQSSSDSSDEPAEKRERKDKVSKETKKRRDFYEKYRNPQREKEMMQLYIRENGSPEEHAIYVWDHFIAQAAAENVFFVAHSYGGLAFVELMIQREADVKNKVTAVALTDSVHNVWHQEAGKTIREWMRENCCNWVSSSEPLDTSVESMLPDCPRVSAGTDRHELTSWKSFPSIFKFFTEASEAKTSSLKPAVTRRSHRIKHEEL.

A signal peptide spans 1 to 18 (MSISLSSLILLPIWINMA). The interval 208 to 247 (KPKIHVQSSSDSSDEPAEKRERKDKVSKETKKRRDFYEKY) is disordered. A compositionally biased stretch (basic and acidic residues) spans 223 to 236 (PAEKRERKDKVSKE). Residue Ser-293 is the Nucleophile of the active site. Residues 413-416 (HEEL) carry the Prevents secretion from ER motif.

It belongs to the ARB2A family. In terms of assembly, interacts with AGO2. Found in a complex, composed of AGO2, CHD7 and ARB2A.

The protein resides in the nucleus. It is found in the cytoplasm. The protein localises to the endoplasmic reticulum. Functionally, plays a role in the regulation of alternative splicing, by interacting with AGO2 and CHD7. Seems to be required for stabilizing protein-protein interactions at the chromatin-spliceosome interface. May have hydrolase activity. In Homo sapiens (Human), this protein is Cotranscriptional regulator ARB2A.